A 100-amino-acid chain; its full sequence is Urease subunit gamma (100 aa).

This sequence belongs to the urease gamma subunit family. In terms of assembly, heterotrimer of UreA (gamma), UreB (beta) and UreC (alpha) subunits. Three heterotrimers associate to form the active enzyme.

It localises to the cytoplasm. The enzyme catalyses urea + 2 H2O + H(+) = hydrogencarbonate + 2 NH4(+). Its pathway is nitrogen metabolism; urea degradation; CO(2) and NH(3) from urea (urease route): step 1/1. The protein is Urease subunit gamma of Ralstonia nicotianae (strain ATCC BAA-1114 / GMI1000) (Ralstonia solanacearum).